A 240-amino-acid chain; its full sequence is Mitochondrial transcription rescue factor 1 (240 aa).

Residues 1–83 (MAVPGVRLLT…ECYFPFSIRL (83 aa)) constitute a mitochondrion transit peptide. The disordered stretch occupies residues 92–127 (STKKTLQKEADEEDSDEETSYPERSEQEEELESEPG). The segment covering 101–124 (ADEEDSDEETSYPERSEQEEELES) has biased composition (acidic residues). 2 positions are modified to phosphoserine: Ser-106 and Ser-116. Positions 142-217 (FRYDVILKTG…LKKVYEEKTE (76 aa)) constitute an S4 RNA-binding domain.

In terms of assembly, monomer. Interacts with POLRMT. Interacts (via S4 domain) with MTRFR (via C-terminus). Associates with mitoribosomal S39 large subunit, peptidyl tRNA and nascent chain.

The protein resides in the mitochondrion matrix. In terms of biological role, mitochondrial RNA-binding protein involved in mitochondrial transcription regulation. Functions as a protective factor to maintain proper mitochondrial RNA level during stress. Acts at the transcription level and its protective function depends on its RNA binding ability. Part of a mitoribosome-associated quality control pathway that prevents aberrant translation by responding to interruptions during elongation. As heterodimer with MTRF, ejects the unfinished nascent chain and peptidyl transfer RNA (tRNA), respectively, from stalled ribosomes. Recruitment of mitoribosome biogenesis factors to these quality control intermediates suggests additional roles for MTRES1 and MTRF during mitoribosome rescue. The sequence is that of Mitochondrial transcription rescue factor 1 (Mtres1) from Mus musculus (Mouse).